The primary structure comprises 233 residues: Thrombin-like enzyme elegaxobin-1 (233 aa).

A Peptidase S1 domain is found at 1–224; that stretch reads VIGGDECNIN…HLDWIKGIIA (224 aa). Cystine bridges form between Cys-7–Cys-138, Cys-25–Cys-41, Cys-73–Cys-231, Cys-117–Cys-185, Cys-149–Cys-164, and Cys-175–Cys-200. Active-site charge relay system residues include His-40 and Asp-85. The active-site Charge relay system is Ser-179.

The protein belongs to the peptidase S1 family. Snake venom subfamily. As to quaternary structure, monomer. Expressed by the venom gland.

The protein localises to the secreted. In terms of biological role, thrombin-like snake venom serine protease that clots rabbit fibrinogen. Only the beta chain of fibrinogen (FGB) is cleaved, releasing fibrinopeptide B. Incubation with human fibrinogen alpha and beta resulted in cleavage of both fibrinogen chains but generated neither fibrinopeptide A nor fibrinopeptide B. Promotes clotting of rabbit fibrinogen, but not bovine or human fibrinogen. This chain is Thrombin-like enzyme elegaxobin-1, found in Protobothrops elegans (Elegant pitviper).